The sequence spans 873 residues: DNA mismatch repair protein MutS (873 aa).

ATP is bound at residue 601–608 (GPNMSGKS).

Belongs to the DNA mismatch repair MutS family.

In terms of biological role, this protein is involved in the repair of mismatches in DNA. It is possible that it carries out the mismatch recognition step. This protein has a weak ATPase activity. The protein is DNA mismatch repair protein MutS of Staphylococcus epidermidis (strain ATCC 12228 / FDA PCI 1200).